A 184-amino-acid chain; its full sequence is Probable RNA 2'-phosphotransferase (184 aa).

Belongs to the KptA/TPT1 family.

Removes the 2'-phosphate from RNA via an intermediate in which the phosphate is ADP-ribosylated by NAD followed by a presumed transesterification to release the RNA and generate ADP-ribose 1''-2''-cyclic phosphate (APPR&gt;P). May function as an ADP-ribosylase. This is Probable RNA 2'-phosphotransferase from Rhodopirellula baltica (strain DSM 10527 / NCIMB 13988 / SH1).